The primary structure comprises 109 residues: Putative polyketide cyclase (109 aa).

The protein to polyketide cyclases.

Involved in developmentally regulated synthesis of a compound biosynthetically related to polyketide antibiotics which is essential for spore color in Streptomyces halstedii. The protein is Putative polyketide cyclase (sch4) of Streptomyces halstedii.